Reading from the N-terminus, the 336-residue chain is Anthranilate phosphoribosyltransferase (336 aa).

5-phospho-alpha-D-ribose 1-diphosphate-binding positions include Gly-79, 82-83 (GD), Thr-87, 89-92 (NIST), 107-115 (KHGNRSVSS), and Ser-119. Gly-79 serves as a coordination point for anthranilate. Ser-91 serves as a coordination point for Mg(2+). Residue Asn-110 coordinates anthranilate. Arg-165 lines the anthranilate pocket. 2 residues coordinate Mg(2+): Asp-224 and Glu-225.

This sequence belongs to the anthranilate phosphoribosyltransferase family. As to quaternary structure, homodimer. The cofactor is Mg(2+).

It carries out the reaction N-(5-phospho-beta-D-ribosyl)anthranilate + diphosphate = 5-phospho-alpha-D-ribose 1-diphosphate + anthranilate. Its pathway is amino-acid biosynthesis; L-tryptophan biosynthesis; L-tryptophan from chorismate: step 2/5. Its function is as follows. Catalyzes the transfer of the phosphoribosyl group of 5-phosphorylribose-1-pyrophosphate (PRPP) to anthranilate to yield N-(5'-phosphoribosyl)-anthranilate (PRA). In Endomicrobium trichonymphae, this protein is Anthranilate phosphoribosyltransferase.